Consider the following 544-residue polypeptide: Chaperonin GroEL (544 aa).

Residues 30 to 33 (TLGP), Lys51, 87 to 91 (DGTTT), Gly415, 481 to 483 (DAL), and Asp497 contribute to the ATP site.

It belongs to the chaperonin (HSP60) family. In terms of assembly, forms a cylinder of 14 subunits composed of two heptameric rings stacked back-to-back. Interacts with the co-chaperonin GroES.

Its subcellular location is the cytoplasm. It catalyses the reaction ATP + H2O + a folded polypeptide = ADP + phosphate + an unfolded polypeptide.. Functionally, together with its co-chaperonin GroES, plays an essential role in assisting protein folding. The GroEL-GroES system forms a nano-cage that allows encapsulation of the non-native substrate proteins and provides a physical environment optimized to promote and accelerate protein folding. The polypeptide is Chaperonin GroEL (Chlamydia felis (strain Fe/C-56) (Chlamydophila felis)).